The chain runs to 461 residues: A-type ATP synthase subunit B (461 aa).

Belongs to the ATPase alpha/beta chains family. Has multiple subunits with at least A(3), B(3), C, D, E, F, H, I and proteolipid K(x).

It is found in the cell membrane. In terms of biological role, component of the A-type ATP synthase that produces ATP from ADP in the presence of a proton gradient across the membrane. The B chain is a regulatory subunit. The polypeptide is A-type ATP synthase subunit B (Methanoculleus marisnigri (strain ATCC 35101 / DSM 1498 / JR1)).